Reading from the N-terminus, the 226-residue chain is Thiamine-phosphate synthase (226 aa).

Residues 46-50 (QLRDK) and N87 each bind 4-amino-2-methyl-5-(diphosphooxymethyl)pyrimidine. The Mg(2+) site is built by D88 and D107. 4-amino-2-methyl-5-(diphosphooxymethyl)pyrimidine is bound at residue S126. 2-[(2R,5Z)-2-carboxy-4-methylthiazol-5(2H)-ylidene]ethyl phosphate is bound at residue 152-154 (TPT). K155 contacts 4-amino-2-methyl-5-(diphosphooxymethyl)pyrimidine. A 2-[(2R,5Z)-2-carboxy-4-methylthiazol-5(2H)-ylidene]ethyl phosphate-binding site is contributed by G183.

The protein belongs to the thiamine-phosphate synthase family. It depends on Mg(2+) as a cofactor.

The enzyme catalyses 2-[(2R,5Z)-2-carboxy-4-methylthiazol-5(2H)-ylidene]ethyl phosphate + 4-amino-2-methyl-5-(diphosphooxymethyl)pyrimidine + 2 H(+) = thiamine phosphate + CO2 + diphosphate. The catalysed reaction is 2-(2-carboxy-4-methylthiazol-5-yl)ethyl phosphate + 4-amino-2-methyl-5-(diphosphooxymethyl)pyrimidine + 2 H(+) = thiamine phosphate + CO2 + diphosphate. It carries out the reaction 4-methyl-5-(2-phosphooxyethyl)-thiazole + 4-amino-2-methyl-5-(diphosphooxymethyl)pyrimidine + H(+) = thiamine phosphate + diphosphate. The protein operates within cofactor biosynthesis; thiamine diphosphate biosynthesis; thiamine phosphate from 4-amino-2-methyl-5-diphosphomethylpyrimidine and 4-methyl-5-(2-phosphoethyl)-thiazole: step 1/1. Condenses 4-methyl-5-(beta-hydroxyethyl)thiazole monophosphate (THZ-P) and 2-methyl-4-amino-5-hydroxymethyl pyrimidine pyrophosphate (HMP-PP) to form thiamine monophosphate (TMP). The polypeptide is Thiamine-phosphate synthase (Mycobacterium sp. (strain KMS)).